The primary structure comprises 184 residues: MAAAMMNKTIVVSKDGCARSSSIPKVATNKMGFASAVAMKKSREMMVWQPFNNKMFETFSYLPPLTDEQISKQVDYILANSWTPCLEFAASDQAYAGNENCIRMGPVASTYQDNRYWTMWKLPMFGCTDGSQVLSEIQACTKAFPDAYIRLVCFDANRQVQISGFLVHRPPTATDYRLPADRQV.

The transit peptide at methionine 1–arginine 43 directs the protein to the chloroplast.

Belongs to the RuBisCO small chain family. Heterohexadecamer of 8 large and 8 small subunits.

It localises to the plastid. The protein localises to the chloroplast. Functionally, ruBisCO catalyzes two reactions: the carboxylation of D-ribulose 1,5-bisphosphate, the primary event in carbon dioxide fixation, as well as the oxidative fragmentation of the pentose substrate. Both reactions occur simultaneously and in competition at the same active site. Although the small subunit is not catalytic it is essential for maximal activity. The protein is Ribulose bisphosphate carboxylase small subunit, chloroplastic 5 of Acetabularia peniculus (Green alga).